We begin with the raw amino-acid sequence, 608 residues long: MNKEERAKRQSKIRNFSIIAHIDHGKSTLADRILEKTNALTQREMKAQLLDSMDLERERGITIKLNAVQLTYKAKDGEEYILHLIDTPGHVDFTYEVSRSLAACEGAILVVDAAQGIEAQTLANVYLALDNDLEILPVINKIDLPSADPERVRQEVEDVIGLDASEAVLASAKAGIGIEEILEQIVEKVPAPDGDPEEPLQCMIFDSLYDPYRGVIAYIRVVNGTVKVGDKVRMMATGKEFEVTEVGVFTPKTTQRDELTVGDVGFLAASIKNVGDTRVGDTITHAKRPAAEPLPGYRKLNPMVFCGLYPIDTARYNDLREALEKLQLNDSALEFEPETSQALGFGFRCGFLGLLHMEIIQERIEREFKIDLITTAPSVIYKVYLTNGEEIVVDNPSNMPDPQSIDRVEEPYVKASIMVPNDYVGAVMEICQGKRGTFIDMQYLDETRVTLTYEIPLSEIVYDFFDQLKSNTKGYASFDYELIGYQVSKLVKMDILLNGEQVDALSFIVHRDSAYDRGKVIVEKLKELIPRQQFEVPIQAAIGNKIVARSTIKAMRKNVLAKCYGGDISRKRKLLEKQKEGKKRMKSVGSVEVPQEAFMAVLRMDDDK.

One can recognise a tr-type G domain in the interval 11 to 193; the sequence is SKIRNFSIIA…QIVEKVPAPD (183 aa). GTP-binding positions include 23–28 and 140–143; these read DHGKST and NKID.

This sequence belongs to the TRAFAC class translation factor GTPase superfamily. Classic translation factor GTPase family. LepA subfamily.

It is found in the cell membrane. It carries out the reaction GTP + H2O = GDP + phosphate + H(+). In terms of biological role, required for accurate and efficient protein synthesis under certain stress conditions. May act as a fidelity factor of the translation reaction, by catalyzing a one-codon backward translocation of tRNAs on improperly translocated ribosomes. Back-translocation proceeds from a post-translocation (POST) complex to a pre-translocation (PRE) complex, thus giving elongation factor G a second chance to translocate the tRNAs correctly. Binds to ribosomes in a GTP-dependent manner. The chain is Elongation factor 4 from Bacillus cytotoxicus (strain DSM 22905 / CIP 110041 / 391-98 / NVH 391-98).